Here is a 426-residue protein sequence, read N- to C-terminus: Adenylosuccinate synthetase (426 aa).

GTP is bound by residues 12-18 (GDEGKGK) and 40-42 (GHT). Aspartate 13 acts as the Proton acceptor in catalysis. Residues aspartate 13 and glycine 40 each contribute to the Mg(2+) site. Residues 13–16 (DEGK), 38–41 (NAGH), threonine 128, arginine 142, glutamine 223, threonine 238, and arginine 302 contribute to the IMP site. The Proton donor role is filled by histidine 41. 298–304 (TTTGRAR) serves as a coordination point for substrate. GTP contacts are provided by residues arginine 304, 330–332 (KLD), and 412–414 (SVG).

This sequence belongs to the adenylosuccinate synthetase family. Homodimer. The cofactor is Mg(2+).

The protein resides in the cytoplasm. It carries out the reaction IMP + L-aspartate + GTP = N(6)-(1,2-dicarboxyethyl)-AMP + GDP + phosphate + 2 H(+). It participates in purine metabolism; AMP biosynthesis via de novo pathway; AMP from IMP: step 1/2. Plays an important role in the de novo pathway of purine nucleotide biosynthesis. Catalyzes the first committed step in the biosynthesis of AMP from IMP. The sequence is that of Adenylosuccinate synthetase from Thermoanaerobacter pseudethanolicus (strain ATCC 33223 / 39E) (Clostridium thermohydrosulfuricum).